A 441-amino-acid polypeptide reads, in one-letter code: Damage-control phosphatase ARMT1 (441 aa).

Alanine 2 bears the N-acetylalanine mark. Lysine 40 is subject to N6-acetyllysine. Serine 102 is subject to Phosphoserine. Mn(2+) contacts are provided by aspartate 253 and asparagine 254. 253–254 is a substrate binding site; the sequence is DN. The S-adenosyl-L-methionine site is built by glutamate 258 and aspartate 291. Aspartate 291 contributes to the Mn(2+) binding site. Substrate is bound by residues 367 to 371 and lysine 404; that span reads DLNYR. Positions 401-404 match the Subfamily III RTxK motif motif; sequence RTLK.

This sequence belongs to the damage-control phosphatase family. Sugar phosphate phosphatase III subfamily. It depends on Mn(2+) as a cofactor. The cofactor is Ni(2+). Automethylated.

It carries out the reaction beta-D-fructose 1-phosphate + H2O = D-fructose + phosphate. The catalysed reaction is beta-D-fructose 6-phosphate = dihydroxyacetone + D-glyceraldehyde 3-phosphate. The enzyme catalyses L-glutamyl-[protein] + S-adenosyl-L-methionine = [protein]-L-glutamate 5-O-methyl ester + S-adenosyl-L-homocysteine. In terms of biological role, metal-dependent phosphatase that shows phosphatase activity against several substrates, including fructose-1-phosphate and fructose-6-phosphate. Its preference for fructose-1-phosphate, a strong glycating agent that causes DNA damage rather than a canonical yeast metabolite, suggests a damage-control function in hexose phosphate metabolism. Has also been shown to have O-methyltransferase activity that methylates glutamate residues of target proteins to form gamma-glutamyl methyl ester residues. Possibly methylates PCNA, suggesting it is involved in the DNA damage response. The polypeptide is Damage-control phosphatase ARMT1 (Homo sapiens (Human)).